A 187-amino-acid polypeptide reads, in one-letter code: uncharacterized protein (187 aa).

The helical transmembrane segment at 8-28 (ITFFIILLICLICILLLLVVF) threads the bilayer. The segment at 99–153 (PLENRRDMEAEEENQINEKQEPENAGETGQEEDDGLQKIHTSVTRTPSVVESQKR) is disordered. Positions 137-149 (IHTSVTRTPSVVE) are enriched in polar residues.

Its subcellular location is the membrane. This is an uncharacterized protein from Homo sapiens (Human).